Here is a 200-residue protein sequence, read N- to C-terminus: Cuticle protein 19.8 (200 aa).

3 consecutive repeat copies span residues 20-23 (AAPA), 26-29 (AAPA), and 43-46 (AAPA). Residues 56-127 (HPQYSYGYSV…EPGVHAPIAA (72 aa)) form the Chitin-binding type R&amp;R domain. A disordered region spans residues 70–89 (TGDSKSQQESRDGDVVQGSY). 5 consecutive repeat copies span residues 126 to 129 (AAPV), 144 to 147 (AAPA), 150 to 153 (AAPV), 159 to 162 (AAPA), and 177 to 180 (AAPA).

In terms of biological role, component of the cuticle of migratory locust which contains more than 100 different structural proteins. This Locusta migratoria (Migratory locust) protein is Cuticle protein 19.8.